The primary structure comprises 50 residues: Parvalbumin (50 aa).

An EF-hand domain is found at 38-50; sequence KTHEQVKKVFNIL.

Belongs to the parvalbumin family.

Functionally, probably regulates the activity of the caudal neurosecretory system. Binds two calcium ions. In Scyliorhinus canicula (Small-spotted catshark), this protein is Parvalbumin.